Consider the following 161-residue polypeptide: Ribonuclease P protein component 2 (161 aa).

Belongs to the eukaryotic/archaeal RNase P protein component 2 family. As to quaternary structure, consists of a catalytic RNA component and at least 4-5 protein subunits.

Its subcellular location is the cytoplasm. It carries out the reaction Endonucleolytic cleavage of RNA, removing 5'-extranucleotides from tRNA precursor.. Functionally, part of ribonuclease P, a protein complex that generates mature tRNA molecules by cleaving their 5'-ends. The polypeptide is Ribonuclease P protein component 2 (Natronomonas pharaonis (strain ATCC 35678 / DSM 2160 / CIP 103997 / JCM 8858 / NBRC 14720 / NCIMB 2260 / Gabara) (Halobacterium pharaonis)).